A 371-amino-acid polypeptide reads, in one-letter code: Beta-1,3-galactosyltransferase 4 (371 aa).

Over 1–4 the chain is Cytoplasmic; the sequence is MPLS. The helical; Signal-anchor for type II membrane protein transmembrane segment at 5-25 threads the bilayer; the sequence is LFRRLLLAVLLLVIIWTLFGP. Residues 26–371 lie on the Lumenal side of the membrane; that stretch reads SGLGEELLSL…RCRFIAWLNS (346 aa). N143 carries an N-linked (GlcNAc...) asparagine glycan. Positions 187-208 are disordered; that stretch reads GGPSEQWQKGKEPQEETTAVHK. Basic and acidic residues predominate over residues 194–207; sequence QKGKEPQEETTAVH.

The protein belongs to the glycosyltransferase 31 family. Highly expressed in thymus, spleen, kidney and testis and, to a lesser extent, in brain and liver.

Its subcellular location is the golgi apparatus membrane. It catalyses the reaction a ganglioside GM2 (d18:1(4E)) + UDP-alpha-D-galactose = a ganglioside GM1 (d18:1(4E)) + UDP + H(+). The catalysed reaction is a ganglioside GM2 + UDP-alpha-D-galactose = a ganglioside GM1 + UDP + H(+). It carries out the reaction a ganglioside GD2 (d18:1(4E)) + UDP-alpha-D-galactose = a ganglioside GD1b (d18:1(4E)) + UDP + H(+). The enzyme catalyses a ganglioside GA2 (d18:1(4E)) + UDP-alpha-D-galactose = a ganglioside GA1 (d18:1(4E)) + UDP + H(+). Its pathway is protein modification; protein glycosylation. Functionally, involved in GM1/GD1B/GA1 ganglioside biosynthesis. This is Beta-1,3-galactosyltransferase 4 (B3galt4) from Rattus norvegicus (Rat).